Consider the following 145-residue polypeptide: Aegerolysin Aa-Pri1 (145 aa).

The propeptide occupies 1–8 (MDSNKDER).

Belongs to the aegerolysin family.

The chain is Aegerolysin Aa-Pri1 (AA-PRI1) from Cyclocybe aegerita (Black poplar mushroom).